A 406-amino-acid polypeptide reads, in one-letter code: LIM/homeobox protein Lhx2 (406 aa).

LIM zinc-binding domains follow at residues 53–105 (CAGC…CKED) and 115–168 (CARC…CRLH). Residues 250–270 (DAEHLDRDQPYPSSQKTKRMR) are disordered. The homeobox DNA-binding region spans 266 to 325 (TKRMRTSFKHHQLRTMKSYFAINHNPDAKDLKQLAQKTGLTKRVLQVWFQNARAKFRRNL). The Nuclear localization signal signature appears at 307–323 (KRVLQVWFQNARAKFRR). Polar residues predominate over residues 328 to 356 (QENTGVDKTSDATLQTGTPSGPASELSNA). Disordered stretches follow at residues 328-375 (QENT…SPTL) and 387-406 (GNLEGHEPHSPSQTTLTNLF). A compositionally biased stretch (low complexity) spans 357-375 (SLSPSSTPTTLTDLTSPTL). Over residues 396–406 (SPSQTTLTNLF) the composition is skewed to polar residues.

In terms of assembly, interacts (via LIM domains) with CITED2. Interacts with POU4F2 isoform 1.

Its subcellular location is the nucleus. In terms of biological role, acts as a transcriptional activator. Stimulates the promoter of the alpha-glycoprotein gene. Transcriptional regulatory protein involved in the control of cell differentiation in developing lymphoid and neural cell types. This chain is LIM/homeobox protein Lhx2 (Lhx2), found in Mus musculus (Mouse).